We begin with the raw amino-acid sequence, 305 residues long: FMRFamide-related peptides type HF-4 (305 aa).

The signal sequence occupies residues 1 to 19; that stretch reads MTSLCLTIAPAVLSLICLS. 3 positions are modified to phenylalanine amide: F36, F47, and F66. I75 is modified (isoleucine amide). 2 positions are modified to phenylalanine amide: F84 and F93. The residue at position 102 (I102) is an Isoleucine amide. 7 positions are modified to phenylalanine amide: F111, F120, F129, F138, F147, F156, and F165. Positions 168–305 are excised as a propeptide; that stretch reads SVDGEIEAGV…EHKQEYMRFG (138 aa).

The protein belongs to the FARP (FMRFamide related peptide) family. As to expression, central nervous system.

The protein localises to the secreted. Its function is as follows. Can function as both cardioregulatory hormones and transmitters and may regulate cardiovascular function. The chain is FMRFamide-related peptides type HF-4 from Cornu aspersum (Brown garden snail).